A 244-amino-acid chain; its full sequence is Serine-rich single-pass membrane protein 1 (244 aa).

A helical transmembrane segment spans residues 35–55 (CGTIGSFLLWYFVIVFVLMFF). Disordered stretches follow at residues 65-114 (DKKD…PVTN), 126-191 (QRRA…LGSY), and 210-244 (LAHHSRQKPSVTPPMKRDSQEESSISDINKKFSKF). Residues 80 to 94 (ASKETSCKRQSKDSA) are compositionally biased toward basic and acidic residues. Polar residues-rich tracts occupy residues 96–114 (DPSQTMKKPKQNQLTPVTN) and 132–142 (QSQFNEVNQNQ). The span at 161–176 (SWKESESEHHPSPDSI) shows a compositional bias: basic and acidic residues.

The protein localises to the membrane. The chain is Serine-rich single-pass membrane protein 1 (SSMEM1) from Homo sapiens (Human).